Consider the following 405-residue polypeptide: MDHLPMPKFGPLAGLRVVFSGIEIAGPFAGQMFAEWGAEVIWIENVAWADTIRVQPNYPQLSRRNLHALSLNIFKDEGREAFLKLMETTDIFIEASKGPAFARRGITDEVLWQHNPKLVIAHLSGFGQYGTEEYTNLPAYNTIAQAFSGYLIQNGDVDQPMPAFPYTADYFSGLTATTAALAALHKVRETSKGESIDIAMYEVMLRMGQYFMMDYFNGGEMCPRMTKGKDPYYAGCGLYKCADGYIVMELVGITQIAECFKDIGLAHLLGTPEIPEGTQLIHRIECSYGPLVEEKLDAWLAAHTIAEVKERFAELNIACAKVLTVPELESNPQYVARESITQWQTMDGRTCKGPNVMPKFKNNPGQIWRGMPSHGMDTAAILKNIGYSENDIQELVSKGLAKVED.

The CoA site is built by K97 and R104. D169 (nucleophile) is an active-site residue.

This sequence belongs to the CoA-transferase III family. CaiB subfamily. As to quaternary structure, homodimer.

The protein resides in the cytoplasm. It carries out the reaction crotonobetainyl-CoA + (R)-carnitine = crotonobetaine + (R)-carnitinyl-CoA. The enzyme catalyses 4-(trimethylamino)butanoyl-CoA + (R)-carnitine = (R)-carnitinyl-CoA + 4-(trimethylamino)butanoate. Its pathway is amine and polyamine metabolism; carnitine metabolism. Functionally, catalyzes the reversible transfer of the CoA moiety from gamma-butyrobetainyl-CoA to L-carnitine to generate L-carnitinyl-CoA and gamma-butyrobetaine. Is also able to catalyze the reversible transfer of the CoA moiety from gamma-butyrobetainyl-CoA or L-carnitinyl-CoA to crotonobetaine to generate crotonobetainyl-CoA. In Escherichia fergusonii (strain ATCC 35469 / DSM 13698 / CCUG 18766 / IAM 14443 / JCM 21226 / LMG 7866 / NBRC 102419 / NCTC 12128 / CDC 0568-73), this protein is L-carnitine CoA-transferase.